A 98-amino-acid polypeptide reads, in one-letter code: NADH-ubiquinone oxidoreductase chain 4L (98 aa).

3 helical membrane passes run 1–21 (MSPM…GLAF), 26–46 (LLSA…ATAT), and 58–78 (ILPM…LAIL).

It belongs to the complex I subunit 4L family.

Its subcellular location is the mitochondrion membrane. It carries out the reaction a ubiquinone + NADH + 5 H(+)(in) = a ubiquinol + NAD(+) + 4 H(+)(out). Its function is as follows. Core subunit of the mitochondrial membrane respiratory chain NADH dehydrogenase (Complex I) which catalyzes electron transfer from NADH through the respiratory chain, using ubiquinone as an electron acceptor. Part of the enzyme membrane arm which is embedded in the lipid bilayer and involved in proton translocation. In Scyliorhinus canicula (Small-spotted catshark), this protein is NADH-ubiquinone oxidoreductase chain 4L (MT-ND4L).